The sequence spans 140 residues: MRHQIAHRKLNRTASHRKAMFANMAASLIEHEQIVTTLPKAKEMAPLMDKLVSLAKKGDLAARRAALSQVRNETAVRKLFDVFGDRYKDRNGGYTRVVKAGFRPGDNAPIAVLELVDRDESAKGAADKARHAAELEAAEG.

This sequence belongs to the bacterial ribosomal protein bL17 family. As to quaternary structure, part of the 50S ribosomal subunit. Contacts protein L32.

The polypeptide is Large ribosomal subunit protein bL17 (Hyphomonas neptunium (strain ATCC 15444)).